Here is a 273-residue protein sequence, read N- to C-terminus: Major prion protein homolog (273 aa).

The N-terminal stretch at 1 to 24 (MARLLTTCCLLALLLAACTDVALS) is a signal peptide. The segment at 25-121 (KKGKGKPSGG…QKPWKPPKTN (97 aa)) is disordered. 8 repeat units span residues 42–47 (RQPSYP), 48–53 (RQPGYP), 54–59 (HNPGYP), 60–65 (HNPGYP), 66–71 (HNPGYP), 72–77 (HNPGYP), 78–83 (HNPGYP), and 84–89 (QNPGYP). Positions 42-89 (RQPSYPRQPGYPHNPGYPHNPGYPHNPGYPHNPGYPHNPGYPQNPGYP) are 8 X 6 AA tandem repeats of [HR]-[NQ]-P-G-Y-P. Low complexity predominate over residues 51–94 (GYPHNPGYPHNPGYPHNPGYPHNPGYPHNPGYPQNPGYPHNPGY). 3 residues coordinate Cu(2+): histidine 66, histidine 72, and histidine 78. 2 residues coordinate Cu(2+): histidine 90 and glycine 93. Residues 101 to 111 (YNPSSGGSYHN) show a composition bias toward polar residues. Cysteine 192 and cysteine 237 form a disulfide bridge. N-linked (GlcNAc...) asparagine glycans are attached at residues asparagine 194, asparagine 209, and asparagine 218. Serine 248 carries the GPI-anchor amidated serine lipid modification. Residues 249 to 273 (GIQLHPADTWLAVLLLLLTTLFAMH) constitute a propeptide, removed in mature form.

This sequence belongs to the prion family. As to quaternary structure, monomer and homodimer. Has a tendency to aggregate into amyloid fibrils containing a cross-beta spine, formed by a steric zipper of superposed beta-strands. Soluble oligomers may represent an intermediate stage on the path to fibril formation. Copper binding may promote oligomerization. Spinal cord and brain.

It is found in the cell membrane. Its primary physiological function is unclear. Has cytoprotective activity against internal or environmental stresses. May play a role in neuronal development and synaptic plasticity. May be required for neuronal myelin sheath maintenance. May play a role in iron uptake and iron homeostasis. Soluble oligomers are toxic to cultured neuroblastoma cells and induce apoptosis (in vitro). Association with GPC1 (via its heparan sulfate chains) targets PRNP to lipid rafts. Also provides Cu(2+) or Zn(2+) for the ascorbate-mediated GPC1 deaminase degradation of its heparan sulfate side chains. The protein is Major prion protein homolog (PRNP) of Gallus gallus (Chicken).